We begin with the raw amino-acid sequence, 538 residues long: Low affinity inorganic phosphate transporter 3 (538 aa).

The Cytoplasmic portion of the chain corresponds to 1 to 24 (MAKDQLQVLNALDVAKTQLYHFTA). The helical transmembrane segment at 25 to 45 (IVIAGMGFFTDAYDLFCISLV) threads the bilayer. The Extracellular segment spans residues 46–70 (TKLLGRIYYFHEGAPKPGILPSGIS). Residues 71 to 91 (AAVNGVAFIGTLSGQLFFGWL) traverse the membrane as a helical segment. The Cytoplasmic portion of the chain corresponds to 92 to 99 (GDKLGRKK). A helical membrane pass occupies residues 100–120 (VYGMTLMLMVICSIACGLSFG). At 121–122 (KT) the chain is on the extracellular side. A helical membrane pass occupies residues 123–143 (ANGVIATLCFFRFWLGFGIGG). Topologically, residues 144–164 (DYPLSATIMSEYANKKTRGAF) are cytoplasmic. The helical transmembrane segment at 165–185 (IAAVFAMQGFGILAGGIVALI) threads the bilayer. Over 186–211 (VSAGFKNAYPAPTYSAHGKDSTPPEA) the chain is Extracellular. Residues 212–232 (DYVWRIIVMIGALPALLTYYW) traverse the membrane as a helical segment. Over 233-292 (RMKMPETARYTALVAKNTVKAAADMSKVLNVEIEEDKATVEKIEENGNSFGLFSKEFLRR) the chain is Cytoplasmic. The chain crosses the membrane as a helical span at residues 293 to 313 (HGLHLLGTTSTWFLLDIAFYS). At 314 to 345 (QNLFQKDIFSKIGWIPPPETMNALDEVFRIAR) the chain is on the extracellular side. Residues 346 to 366 (AQTLIALCSTVPGYWFTVAFI) traverse the membrane as a helical segment. The Cytoplasmic portion of the chain corresponds to 367–371 (DKMGR). A helical membrane pass occupies residues 372-392 (FAIQLMGSFFMTVFMFALAIP). Over 393–402 (YDHWTKKENR) the chain is Extracellular. The chain crosses the membrane as a helical span at residues 403-423 (IGFVIMYSLTFFFANFGPNAT). Residues 424-442 (TFVVPAEIFPARLRSTCHG) are Cytoplasmic-facing. Residues 443-463 (ISAAAGKAGAIVGAFGFLYAA) form a helical membrane-spanning segment. Residues 464–483 (QSTDPKKVDAGYPTGIGVKN) lie on the Extracellular side of the membrane. The helical transmembrane segment at 484 to 504 (ALIVLGCVNFLGMLSTLLVPE) threads the bilayer. Topologically, residues 505–538 (SKGKSLEEMSKENEGEEENYGTETKGENAQTVPV) are cytoplasmic. Residues 506-517 (KGKSLEEMSKEN) show a composition bias toward basic and acidic residues. Residues 506 to 538 (KGKSLEEMSKENEGEEENYGTETKGENAQTVPV) are disordered.

Belongs to the major facilitator superfamily. Phosphate:H(+) symporter (TC 2.A.1.9) family. In terms of tissue distribution, expressed at low levels in non-mycorrhized roots.

It is found in the cell membrane. It carries out the reaction phosphate(in) + H(+)(in) = phosphate(out) + H(+)(out). Functionally, low-affinity transporter for external inorganic phosphate (Pi) probably involved in the acquisition of phosphate released by arbuscular mycorrhizal (AM) fungi during AM symbiosis. This chain is Low affinity inorganic phosphate transporter 3, found in Petunia hybrida (Petunia).